The following is a 383-amino-acid chain: Chorismate synthase (383 aa).

The NADP(+) site is built by Arg39 and Arg45. Residues 128–130, Gly291, 306–310, and Arg332 each bind FMN; these read RAS and KPIAT.

This sequence belongs to the chorismate synthase family. In terms of assembly, homotetramer. Requires FMNH2 as cofactor.

The enzyme catalyses 5-O-(1-carboxyvinyl)-3-phosphoshikimate = chorismate + phosphate. The protein operates within metabolic intermediate biosynthesis; chorismate biosynthesis; chorismate from D-erythrose 4-phosphate and phosphoenolpyruvate: step 7/7. In terms of biological role, catalyzes the anti-1,4-elimination of the C-3 phosphate and the C-6 proR hydrogen from 5-enolpyruvylshikimate-3-phosphate (EPSP) to yield chorismate, which is the branch point compound that serves as the starting substrate for the three terminal pathways of aromatic amino acid biosynthesis. This reaction introduces a second double bond into the aromatic ring system. The polypeptide is Chorismate synthase (Thermus thermophilus (strain ATCC BAA-163 / DSM 7039 / HB27)).